The primary structure comprises 411 residues: CCA-adding enzyme (411 aa).

ATP contacts are provided by G8 and R11. CTP is bound by residues G8 and R11. Mg(2+) contacts are provided by E21 and D23. The ATP site is built by R91, R137, and R140. Positions 91, 137, and 140 each coordinate CTP. Residues 227 to 328 (LGNQTMTRLS…MTIFQAFDCW (102 aa)) form the HD domain.

Belongs to the tRNA nucleotidyltransferase/poly(A) polymerase family. Bacterial CCA-adding enzyme type 2 subfamily. Requires Mg(2+) as cofactor.

The catalysed reaction is a tRNA precursor + 2 CTP + ATP = a tRNA with a 3' CCA end + 3 diphosphate. It carries out the reaction a tRNA with a 3' CCA end + 2 CTP + ATP = a tRNA with a 3' CCACCA end + 3 diphosphate. Catalyzes the addition and repair of the essential 3'-terminal CCA sequence in tRNAs without using a nucleic acid template. Adds these three nucleotides in the order of C, C, and A to the tRNA nucleotide-73, using CTP and ATP as substrates and producing inorganic pyrophosphate. tRNA 3'-terminal CCA addition is required both for tRNA processing and repair. Also involved in tRNA surveillance by mediating tandem CCA addition to generate a CCACCA at the 3' terminus of unstable tRNAs. While stable tRNAs receive only 3'-terminal CCA, unstable tRNAs are marked with CCACCA and rapidly degraded. The protein is CCA-adding enzyme of Blochmanniella floridana.